Consider the following 217-residue polypeptide: Large ribosomal subunit protein uL3 (217 aa).

The segment covering 134–146 (GRATHGNSRSHNV) has biased composition (polar residues). The segment at 134–154 (GRATHGNSRSHNVPGSIGMAQ) is disordered. Gln154 is modified (N5-methylglutamine).

It belongs to the universal ribosomal protein uL3 family. In terms of assembly, part of the 50S ribosomal subunit. Forms a cluster with proteins L14 and L19. Methylated by PrmB.

Its function is as follows. One of the primary rRNA binding proteins, it binds directly near the 3'-end of the 23S rRNA, where it nucleates assembly of the 50S subunit. The sequence is that of Large ribosomal subunit protein uL3 from Burkholderia cenocepacia (strain HI2424).